The chain runs to 394 residues: 3-dehydroquinate synthase (394 aa).

Residues 112–116, 136–137, lysine 149, lysine 158, and 176–179 contribute to the NAD(+) site; these read GVIGD, TT, and TLAT. The Zn(2+) site is built by glutamate 191, histidine 254, and histidine 276. Polar residues predominate over residues 371–388; it reads STNQHTTYSPHQHATTKP. A disordered region spans residues 371-394; it reads STNQHTTYSPHQHATTKPPNRRPH.

The protein belongs to the sugar phosphate cyclases superfamily. Dehydroquinate synthase family. NAD(+) is required as a cofactor. Co(2+) serves as cofactor. The cofactor is Zn(2+).

Its subcellular location is the cytoplasm. The enzyme catalyses 7-phospho-2-dehydro-3-deoxy-D-arabino-heptonate = 3-dehydroquinate + phosphate. It functions in the pathway metabolic intermediate biosynthesis; chorismate biosynthesis; chorismate from D-erythrose 4-phosphate and phosphoenolpyruvate: step 2/7. In terms of biological role, catalyzes the conversion of 3-deoxy-D-arabino-heptulosonate 7-phosphate (DAHP) to dehydroquinate (DHQ). The protein is 3-dehydroquinate synthase of Xylella fastidiosa (strain 9a5c).